The chain runs to 494 residues: Putative myristoylated protein 006R (494 aa).

A lipid anchor (N-myristoyl glycine; by host) is attached at Gly-2. Helical transmembrane passes span 193–213 (VAALVAIVLGVPVVSVIGGIA), 214–234 (VAGRWMFPISILAGAGCLVVW), and 465–485 (WLLYLGVALIIVGIFGSILAF).

This sequence belongs to the IIV-6 118L/458R family.

It is found in the membrane. This chain is Putative myristoylated protein 006R, found in Aedes vexans (Inland floodwater mosquito).